Consider the following 254-residue polypeptide: Ribosomal RNA small subunit methyltransferase J (254 aa).

S-adenosyl-L-methionine-binding positions include 107–108 (RD), 123–124 (ER), and Asp177.

It belongs to the methyltransferase superfamily. RsmJ family.

The protein resides in the cytoplasm. The catalysed reaction is guanosine(1516) in 16S rRNA + S-adenosyl-L-methionine = N(2)-methylguanosine(1516) in 16S rRNA + S-adenosyl-L-homocysteine + H(+). Its function is as follows. Specifically methylates the guanosine in position 1516 of 16S rRNA. The protein is Ribosomal RNA small subunit methyltransferase J of Histophilus somni (strain 2336) (Haemophilus somnus).